A 633-amino-acid polypeptide reads, in one-letter code: DNA mismatch repair protein MutL (633 aa).

Belongs to the DNA mismatch repair MutL/HexB family.

Functionally, this protein is involved in the repair of mismatches in DNA. It is required for dam-dependent methyl-directed DNA mismatch repair. May act as a 'molecular matchmaker', a protein that promotes the formation of a stable complex between two or more DNA-binding proteins in an ATP-dependent manner without itself being part of a final effector complex. The sequence is that of DNA mismatch repair protein MutL from Macrococcus caseolyticus (strain JCSC5402) (Macrococcoides caseolyticum).